A 799-amino-acid chain; its full sequence is Homeobox protein engrailed (799 aa).

Disordered regions lie at residues 189–331, 369–444, 554–664, and 678–705; these read LPSR…DATK, GNFL…SLRQ, HPFL…DKAK, and SDRP…RTAF. Polar residues predominate over residues 210–222; it reads QSPSTSIRSNLVS. 2 stretches are compositionally biased toward basic and acidic residues: residues 228–239 and 246–256; these read SRRDDQETSDSC and RAINDSERYDV. 2 stretches are compositionally biased toward polar residues: residues 284–299 and 377–401; these read LNLT…QLFH and HTFQ…SSPD. Low complexity predominate over residues 416-431; it reads ESLSSPSSSSSSSRSS. 2 stretches are compositionally biased toward basic and acidic residues: residues 608-619 and 629-648; these read DQKKRSRDESAS and VHLK…EKGN. The segment at residues 698-757 is a DNA-binding region (homeobox); it reads EKRPRTAFTNDQLQRLKREFDECRYLTETRRKNLADELGLTESQIKIWFQNKRAKIKKSV.

The protein belongs to the engrailed homeobox family. As to expression, expressed in the dorsal ectoderm of early gastrulae in a band corresponding to the peripheral area of the presumptive shell gland. Also expressed at four points along the posterior ectoderm. In late gastrulae, it is predominantly expressed in the peripheral ectoderm of the shell gland and in spots at the posterior end behind the presumptive foot. Expressed in late trochophore larvae at four points behind the foot, at two locations at the base of the foot and in the peripheral ectoderm of the shell gland.

It is found in the nucleus. In terms of biological role, may be involved in shell and shell gland formation during development. This chain is Homeobox protein engrailed, found in Lymnaea stagnalis (Great pond snail).